The following is a 144-amino-acid chain: Large ribosomal subunit protein uL15 (144 aa).

The interval 1 to 56 (MELNNLKPAAGAKHAKRRVGRGIGSGLGKTAGRGHKGQKSRSGGFHKVGFEGGQMP) is disordered. The span at 21–31 (RGIGSGLGKTA) shows a compositional bias: gly residues.

This sequence belongs to the universal ribosomal protein uL15 family. In terms of assembly, part of the 50S ribosomal subunit.

Its function is as follows. Binds to the 23S rRNA. The polypeptide is Large ribosomal subunit protein uL15 (Burkholderia cenocepacia (strain HI2424)).